Here is an 838-residue protein sequence, read N- to C-terminus: Spindle pole body component 110 (838 aa).

Disordered regions lie at residues 1–67, 187–209, and 287–310; these read MSDS…ADDT, SEHKDQADLEQDARSNEKEMRSL, and LQKANHDSSSLADQKLQTRSKEIE. Coiled-coil stretches lie at residues 163–644 and 682–709; these read LQEW…GKRE and SEKYQHMKQRLLNELKVLQEENLELERA. Over residues 287–303 the composition is skewed to polar residues; it reads LQKANHDSSSLADQKLQ.

This sequence belongs to the SPC110 family. Homodimer.

The protein resides in the nucleus. It is found in the cytoplasm. Its subcellular location is the cytoskeleton. It localises to the microtubule organizing center. The protein localises to the spindle pole body. Its function is as follows. Component of the spindle pole body (SPB) required for the proper execution of spindle pole body (SPB) duplication. Potential role in cross-linking filaments or anchoring other molecules. It is essential for growth. This is Spindle pole body component 110 (SPC110) from Lachancea thermotolerans (strain ATCC 56472 / CBS 6340 / NRRL Y-8284) (Yeast).